The chain runs to 169 residues: MLRLDAELNKDTISKLKKPLGKLYPHFEDAIEEIKSSEFLISVGDATFNNLTKYELYPDIGIIDNLIQRKNHNHEVIKAENILKAKNPAGTITDDLWETIGQAMKLSGDGNCHVIEVDGEEDLAVLPCILMASDETTILYGQPNEGLVLLKVCDAKDYAQNLIDTFIKE.

GTP is bound by residues D45, D64, and E121.

This sequence belongs to the GTP-dependent DPCK family.

It catalyses the reaction 3'-dephospho-CoA + GTP = GDP + CoA + H(+). The protein operates within cofactor biosynthesis; coenzyme A biosynthesis. In terms of biological role, catalyzes the GTP-dependent phosphorylation of the 3'-hydroxyl group of dephosphocoenzyme A to form coenzyme A (CoA). In Methanobrevibacter smithii (strain ATCC 35061 / DSM 861 / OCM 144 / PS), this protein is GTP-dependent dephospho-CoA kinase.